We begin with the raw amino-acid sequence, 159 residues long: Ribosomal RNA large subunit methyltransferase H (159 aa).

Residues Leu-76, Gly-108, and 127–132 each bind S-adenosyl-L-methionine; that span reads FSRMTF.

The protein belongs to the RNA methyltransferase RlmH family. As to quaternary structure, homodimer.

The protein resides in the cytoplasm. The enzyme catalyses pseudouridine(1915) in 23S rRNA + S-adenosyl-L-methionine = N(3)-methylpseudouridine(1915) in 23S rRNA + S-adenosyl-L-homocysteine + H(+). Specifically methylates the pseudouridine at position 1915 (m3Psi1915) in 23S rRNA. This Bacillus pumilus (strain SAFR-032) protein is Ribosomal RNA large subunit methyltransferase H.